The primary structure comprises 536 residues: Solute carrier family 2, facilitated glucose transporter member 10 (536 aa).

Over 1–15 (MGLRPAVLLLCASVS) the chain is Cytoplasmic. Residues 16-36 (LLGGLTFGYELAVISGALLPL) traverse the membrane as a helical segment. Topologically, residues 37–48 (QLNFGLSCLEQE) are extracellular. The chain crosses the membrane as a helical span at residues 49-69 (LLVGSLLLGALLASLVGGFLI). At 70 to 82 (DCYGRRRAILGSN) the chain is on the cytoplasmic side. A helical transmembrane segment spans residues 83–103 (AVLLAGSLILGLASSLPWLLL). Over 104-107 (GRLS) the chain is Extracellular. The chain crosses the membrane as a helical span at residues 108–128 (VGFAISLSSMACCIYVSELVG). The Cytoplasmic portion of the chain corresponds to 129–132 (PRQR). A helical transmembrane segment spans residues 133-153 (GVLVSLYEVGITVGILFSYGL). Over 154–166 (NYVLAGSPWGWRH) the chain is Extracellular. A helical transmembrane segment spans residues 167–187 (MFGWAAAPALLQSLSLFLLPA). Over 188 to 232 (GAEGTAAPKDLIPLQGRETSKPGLVKPQYSFLDLFRAQDGMWSRT) the chain is Cytoplasmic. A helical transmembrane segment spans residues 233–253 (VVGLGLVLFQQLTGQPNVLYY). 242-243 (QQ) lines the D-glucose pocket. Over 254–269 (ASTIFRSVGFHGGSSA) the chain is Extracellular. A helical transmembrane segment spans residues 270–290 (VLASVGLGTVKVAATLVATGL). Residues 291 to 298 (VDRAGRRV) lie on the Cytoplasmic side of the membrane. The chain crosses the membrane as a helical span at residues 299–319 (LLLFGCALMALSVSGIGLVSF). At 320-402 (AVSLDSGPSC…VPTSPILEHT (83 aa)) the chain is on the extracellular side. Residues 403–423 (LLCWSALVCMMVYVSAFSVGF) traverse the membrane as a helical segment. The Cytoplasmic portion of the chain corresponds to 424–442 (GPVTWLVLSEIYPAEIRGR). Residue Trp-428 coordinates D-glucose. The helical transmembrane segment at 443–463 (AFAFCSSFNWAANLFISLSFL) threads the bilayer. At 464–468 (DLIGA) the chain is on the extracellular side. The helical transmembrane segment at 469–489 (IGLAWTFLLYGLTAVLGLAFI) threads the bilayer. At 490–536 (YLLVPETKGQSLAEIEQQFQTSRFPLNFGHRQRIGIQYHRLDVSSAS) the chain is on the cytoplasmic side.

It belongs to the major facilitator superfamily. Sugar transporter (TC 2.A.1.1) family. Glucose transporter subfamily.

It localises to the endomembrane system. It is found in the cytoplasm. The protein resides in the perinuclear region. The enzyme catalyses D-glucose(out) = D-glucose(in). In terms of biological role, facilitative glucose transporter required for the development of the cardiovascular system. The sequence is that of Solute carrier family 2, facilitated glucose transporter member 10 from Mus musculus (Mouse).